A 217-amino-acid polypeptide reads, in one-letter code: Octanoyltransferase (217 aa).

In terms of domain architecture, BPL/LPL catalytic spans 32-207; that stretch reads SESHDELWIV…TFSQLLGYQH (176 aa). Substrate is bound by residues 71-78, 138-140, and 151-153; these read RGGQVTYH, SLG, and GLA. Cys169 (acyl-thioester intermediate) is an active-site residue.

It belongs to the LipB family.

It localises to the cytoplasm. It carries out the reaction octanoyl-[ACP] + L-lysyl-[protein] = N(6)-octanoyl-L-lysyl-[protein] + holo-[ACP] + H(+). It participates in protein modification; protein lipoylation via endogenous pathway; protein N(6)-(lipoyl)lysine from octanoyl-[acyl-carrier-protein]: step 1/2. In terms of biological role, catalyzes the transfer of endogenously produced octanoic acid from octanoyl-acyl-carrier-protein onto the lipoyl domains of lipoate-dependent enzymes. Lipoyl-ACP can also act as a substrate although octanoyl-ACP is likely to be the physiological substrate. This is Octanoyltransferase from Shewanella baltica (strain OS223).